Reading from the N-terminus, the 933-residue chain is Protein translocase subunit SecA (933 aa).

ATP-binding positions include Gln87, 105-109, and Asp515; that span reads GEGKT. Positions 917, 919, 928, and 929 each coordinate Zn(2+).

Belongs to the SecA family. As to quaternary structure, monomer and homodimer. Part of the essential Sec protein translocation apparatus which comprises SecA, SecYEG and auxiliary proteins SecDF-YajC and YidC. It depends on Zn(2+) as a cofactor.

The protein resides in the cell inner membrane. The protein localises to the cytoplasm. It catalyses the reaction ATP + H2O + cellular proteinSide 1 = ADP + phosphate + cellular proteinSide 2.. Its function is as follows. Part of the Sec protein translocase complex. Interacts with the SecYEG preprotein conducting channel. Has a central role in coupling the hydrolysis of ATP to the transfer of proteins into and across the cell membrane, serving both as a receptor for the preprotein-SecB complex and as an ATP-driven molecular motor driving the stepwise translocation of polypeptide chains across the membrane. The polypeptide is Protein translocase subunit SecA (Burkholderia cenocepacia (strain ATCC BAA-245 / DSM 16553 / LMG 16656 / NCTC 13227 / J2315 / CF5610) (Burkholderia cepacia (strain J2315))).